A 107-amino-acid chain; its full sequence is Ig kappa chain V-VI region XRPC 24 (107 aa).

Residues 1–23 (EIVLTQSPAITAASLGQKVTITC) are framework-1. Cys-23 and Cys-87 are disulfide-bonded. A complementarity-determining-1 region spans residues 24 to 33 (SASSSVSYMH). Residues 34–48 (WYQQKSGTSPKPWIY) are framework-2. Residues 49 to 55 (EISKLAS) are complementarity-determining-2. The segment at 56–87 (GVPARFSGSGSGTSYSLTISSMEAEDAAIYYC) is framework-3. The complementarity-determining-3 stretch occupies residues 88 to 96 (QQWNYPLIT). The framework-4 stretch occupies residues 97–106 (FGSGTKLEIK).

The chain is Ig kappa chain V-VI region XRPC 24 from Mus musculus (Mouse).